A 110-amino-acid chain; its full sequence is UPF0339 protein YegP (110 aa).

Repeat copies occupy residues 10-58 and 61-109.

The protein belongs to the UPF0339 family. Duplicated subfamily.

In Escherichia coli (strain K12), this protein is UPF0339 protein YegP (yegP).